Consider the following 115-residue polypeptide: MDLIKIAEEAFATKKELPSFKSGDTITVAYRIKEGNKERIQQYRGVVIRISGHGDKKRFTVRKMSENVGVERIFPIESPFIESITVNKVGKVRRAKLYYLRALTGKKARIKEKRV.

The protein belongs to the bacterial ribosomal protein bL19 family.

Its function is as follows. This protein is located at the 30S-50S ribosomal subunit interface and may play a role in the structure and function of the aminoacyl-tRNA binding site. In Parabacteroides distasonis (strain ATCC 8503 / DSM 20701 / CIP 104284 / JCM 5825 / NCTC 11152), this protein is Large ribosomal subunit protein bL19.